Here is a 119-residue protein sequence, read N- to C-terminus: Ribonuclease P protein component (119 aa).

The protein belongs to the RnpA family. Consists of a catalytic RNA component (M1 or rnpB) and a protein subunit.

It catalyses the reaction Endonucleolytic cleavage of RNA, removing 5'-extranucleotides from tRNA precursor.. RNaseP catalyzes the removal of the 5'-leader sequence from pre-tRNA to produce the mature 5'-terminus. It can also cleave other RNA substrates such as 4.5S RNA. The protein component plays an auxiliary but essential role in vivo by binding to the 5'-leader sequence and broadening the substrate specificity of the ribozyme. In Salmonella arizonae (strain ATCC BAA-731 / CDC346-86 / RSK2980), this protein is Ribonuclease P protein component.